The following is a 375-amino-acid chain: Chaperone protein DnaJ (375 aa).

Residues 5 to 70 (GYYEVLGVSK…QKRQAYDQFG (66 aa)) enclose the J domain. Residues 142 to 220 (GKEYKIEIPR…CKGEGLTEKR (79 aa)) form a CR-type zinc finger. Residues C155, C158, C172, C175, C194, C197, C208, and C211 each coordinate Zn(2+). CXXCXGXG motif repeat units lie at residues 155-162 (CVDCTGSG), 172-179 (CPDCSGTG), 194-201 (CPRCKGKG), and 208-215 (CKTCKGEG).

It belongs to the DnaJ family. In terms of assembly, homodimer. Zn(2+) serves as cofactor.

The protein resides in the cytoplasm. In terms of biological role, participates actively in the response to hyperosmotic and heat shock by preventing the aggregation of stress-denatured proteins and by disaggregating proteins, also in an autonomous, DnaK-independent fashion. Unfolded proteins bind initially to DnaJ; upon interaction with the DnaJ-bound protein, DnaK hydrolyzes its bound ATP, resulting in the formation of a stable complex. GrpE releases ADP from DnaK; ATP binding to DnaK triggers the release of the substrate protein, thus completing the reaction cycle. Several rounds of ATP-dependent interactions between DnaJ, DnaK and GrpE are required for fully efficient folding. Also involved, together with DnaK and GrpE, in the DNA replication of plasmids through activation of initiation proteins. In Leptospira biflexa serovar Patoc (strain Patoc 1 / Ames), this protein is Chaperone protein DnaJ.